A 258-amino-acid polypeptide reads, in one-letter code: Electron transfer flavoprotein beta subunit lysine methyltransferase (258 aa).

It belongs to the methyltransferase superfamily. ETFBKMT family.

Its subcellular location is the cytoplasm. The protein resides in the mitochondrion matrix. It carries out the reaction L-lysyl-[protein] + 3 S-adenosyl-L-methionine = N(6),N(6),N(6)-trimethyl-L-lysyl-[protein] + 3 S-adenosyl-L-homocysteine + 3 H(+). Functionally, protein-lysine methyltransferase that selectively trimethylates the flavoprotein ETFB in mitochondria. Thereby, may negatively regulate the function of ETFB in electron transfer from Acyl-CoA dehydrogenases to the main respiratory chain. In Danio rerio (Zebrafish), this protein is Electron transfer flavoprotein beta subunit lysine methyltransferase.